The sequence spans 192 residues: uncharacterized protein (192 aa).

A Nudix hydrolase domain is found at 29–160 (HRQAAVLIPI…PLDIYRRGDS (132 aa)). A Nudix box motif is present at residues 67-89 (GAVDDTDASVIAAALREAEEEVA). Residues glutamate 83 and glutamate 87 each coordinate Mg(2+).

This sequence belongs to the Nudix hydrolase family. PCD1 subfamily. Mn(2+) serves as cofactor. Mg(2+) is required as a cofactor.

Functionally, probably mediates the hydrolysis of some nucleoside diphosphate derivatives. This is an uncharacterized protein from Shigella flexneri serotype 5b (strain 8401).